We begin with the raw amino-acid sequence, 432 residues long: uncharacterized protein (432 aa).

SIS domains lie at 105 to 244 and 277 to 422; these read WLTE…DLVS and CDKK…VDLP.

This is an uncharacterized protein from Saccharomyces cerevisiae (strain Lalvin EC1118 / Prise de mousse) (Baker's yeast).